The following is a 416-amino-acid chain: Casein kinase I isoform epsilon (416 aa).

The Protein kinase domain maps to 9–277; sequence YRLGRKIGSG…YLRQLFRNLF (269 aa). ATP-binding positions include 15–23 and Lys38; that span reads IGSGSFGDI. The active-site Proton acceptor is Asp128. A compositionally biased stretch (basic and acidic residues) spans 301–318; it reads PEDVDRERREHEREERMG. The disordered stretch occupies residues 301 to 416; the sequence is PEDVDRERRE…TSVPFDHLGK (116 aa). Phosphoserine is present on residues Ser343 and Ser354. The segment covering 351–365 has biased composition (polar residues); it reads TPASRIQQTGNTSPR. Position 362 is a phosphothreonine (Thr362). Ser363 bears the Phosphoserine mark. Residue Arg382 is modified to Omega-N-methylarginine. Phosphoserine is present on residues Ser389, Ser405, and Ser408.

The protein belongs to the protein kinase superfamily. CK1 Ser/Thr protein kinase family. Casein kinase I subfamily. Monomer. Component of the circadian core oscillator, which includes the CRY proteins, CLOCK, or NPAS2, ARTNL/BMAL1 or ARTNL2/BMAL2, CSNK1D and/or CSNK1E, TIMELESS and the PER proteins. Interacts with ANKRD6. Interacts with PER1. Interacts with DBNDD2, LRP5, LRP6 and SOCS3. Interacts with SNAI1 (via zinc fingers). Interacts with DDX3X; this interaction greatly enhances CSNK1E affinity for ATP and DVL2 phosphorylation, but inhibits DDX3X ATPase/helicase activity. In the presence of RNA, the interaction is decreased. Interacts with FAM83A, FAM83B, FAM83E and FAM83H (via DUF1669). Post-translationally, autophosphorylated. Partially dephosphorylated by PPP5C. May be dephosphorylated by PP1. Expressed in all tissues examined, including brain, heart, lung, liver, pancreas, kidney, placenta and skeletal muscle. Expressed in monocytes and lymphocytes but not in granulocytes.

The protein resides in the cytoplasm. The protein localises to the nucleus. The enzyme catalyses L-seryl-[protein] + ATP = O-phospho-L-seryl-[protein] + ADP + H(+). The catalysed reaction is L-threonyl-[protein] + ATP = O-phospho-L-threonyl-[protein] + ADP + H(+). Its activity is regulated as follows. Phosphorylation leads to a decrease in the catalytic activity. In terms of biological role, casein kinases are operationally defined by their preferential utilization of acidic proteins such as caseins as substrates. Participates in Wnt signaling. Phosphorylates DVL1. Phosphorylates DVL2. Phosphorylates NEDD9/HEF1. Central component of the circadian clock. In balance with PP1, determines the circadian period length, through the regulation of the speed and rhythmicity of PER1 and PER2 phosphorylation. Controls PER1 and PER2 nuclear transport and degradation. Inhibits cytokine-induced granuloytic differentiation. The sequence is that of Casein kinase I isoform epsilon (Csnk1e) from Mus musculus (Mouse).